Consider the following 267-residue polypeptide: Distal basal body ring component protein (267 aa).

The signal sequence occupies residues 1–29 (MKAFLFAAAATLVITALSAPAFAGTPVTL).

As to quaternary structure, flaD is a subunit of the flagellar transenvelope basal body.

The protein resides in the periplasm. It is found in the bacterial flagellum basal body. In terms of biological role, flaD might be the structural protein of the distal basal body ring P, or it is necessary for the assembly of the P ring. The protein is Distal basal body ring component protein (flaD) of Caulobacter vibrioides (strain ATCC 19089 / CIP 103742 / CB 15) (Caulobacter crescentus).